A 235-amino-acid chain; its full sequence is Ubiquinone biosynthesis O-methyltransferase (235 aa).

The S-adenosyl-L-methionine site is built by arginine 36, glycine 56, aspartate 77, and methionine 122.

The protein belongs to the methyltransferase superfamily. UbiG/COQ3 family.

The catalysed reaction is a 3-demethylubiquinol + S-adenosyl-L-methionine = a ubiquinol + S-adenosyl-L-homocysteine + H(+). It catalyses the reaction a 3-(all-trans-polyprenyl)benzene-1,2-diol + S-adenosyl-L-methionine = a 2-methoxy-6-(all-trans-polyprenyl)phenol + S-adenosyl-L-homocysteine + H(+). The protein operates within cofactor biosynthesis; ubiquinone biosynthesis. Functionally, O-methyltransferase that catalyzes the 2 O-methylation steps in the ubiquinone biosynthetic pathway. The chain is Ubiquinone biosynthesis O-methyltransferase from Leptothrix cholodnii (strain ATCC 51168 / LMG 8142 / SP-6) (Leptothrix discophora (strain SP-6)).